A 263-amino-acid chain; its full sequence is 3-deoxy-manno-octulosonate cytidylyltransferase (263 aa).

The protein belongs to the KdsB family.

The protein resides in the cytoplasm. It carries out the reaction 3-deoxy-alpha-D-manno-oct-2-ulosonate + CTP = CMP-3-deoxy-beta-D-manno-octulosonate + diphosphate. It participates in nucleotide-sugar biosynthesis; CMP-3-deoxy-D-manno-octulosonate biosynthesis; CMP-3-deoxy-D-manno-octulosonate from 3-deoxy-D-manno-octulosonate and CTP: step 1/1. The protein operates within bacterial outer membrane biogenesis; lipopolysaccharide biosynthesis. Activates KDO (a required 8-carbon sugar) for incorporation into bacterial lipopolysaccharide in Gram-negative bacteria. This is 3-deoxy-manno-octulosonate cytidylyltransferase from Burkholderia multivorans (strain ATCC 17616 / 249).